The primary structure comprises 173 residues: Protein-export protein SecB (173 aa).

This sequence belongs to the SecB family. Homotetramer, a dimer of dimers. One homotetramer interacts with 1 SecA dimer.

It is found in the cytoplasm. In terms of biological role, one of the proteins required for the normal export of preproteins out of the cell cytoplasm. It is a molecular chaperone that binds to a subset of precursor proteins, maintaining them in a translocation-competent state. It also specifically binds to its receptor SecA. The chain is Protein-export protein SecB from Ralstonia nicotianae (strain ATCC BAA-1114 / GMI1000) (Ralstonia solanacearum).